The sequence spans 102 residues: Small ubiquitin-related modifier 1 (102 aa).

Residues 21–98 (DYIKLKVIGQ…IEVYQEQTGG (78 aa)) enclose the Ubiquitin-like domain. Glycine 98 is covalently cross-linked (Glycyl lysine isopeptide (Gly-Lys) (interchain with K-? in acceptor proteins)). The propeptide occupies 99-102 (HSTI).

It belongs to the ubiquitin family. SUMO subfamily. In terms of assembly, interacts with sae2, ube2i, ranbp2, pias1 and pias2. Interacts with sox9 and sox10. Covalently attached to a number of proteins. In terms of processing, cleavage of precursor form by a sentrin-specific protease is necessary for function.

Its subcellular location is the nucleus membrane. It localises to the nucleus speckle. It is found in the cytoplasm. The protein resides in the nucleus. The protein localises to the PML body. Its subcellular location is the cell membrane. In terms of biological role, ubiquitin-like protein that can be covalently attached to proteins as a monomer or a lysine-linked polymer. Covalent attachment via an isopeptide bond to its substrates requires prior activation by the E1 complex sae1-sae2 and linkage to the E2 enzyme ube2i. This post-translational modification on lysine residues of proteins plays a crucial role in a number of cellular processes such as nuclear transport, DNA replication and repair, mitosis and signal transduction. Polymeric sumo1 chains are also susceptible to polyubiquitination which functions as a signal for proteasomal degradation of modified proteins. This is Small ubiquitin-related modifier 1 (sumo1) from Xenopus tropicalis (Western clawed frog).